Here is a 182-residue protein sequence, read N- to C-terminus: MVLIDYSKLSKEVAYALRHAPWEYGLELDAEGWVDINQLLSSLHECEKWKKVSEHDLHVMIEKSDKKRYEISNGKIRALYGHSIPQRIIKEQKCPPEVLYHGTARRFVKSIKEKGLQPQGRQYVHLSADVETALQVGKRRDIKPVLLIVNALEAWSEGIKFYLGNDKVWLADAIPSKYIRFE.

Belongs to the KptA/TPT1 family.

Functionally, removes the 2'-phosphate from RNA via an intermediate in which the phosphate is ADP-ribosylated by NAD followed by a presumed transesterification to release the RNA and generate ADP-ribose 1''-2''-cyclic phosphate (APPR&gt;P). May function as an ADP-ribosylase. The protein is Probable RNA 2'-phosphotransferase of Acetivibrio thermocellus (strain ATCC 27405 / DSM 1237 / JCM 9322 / NBRC 103400 / NCIMB 10682 / NRRL B-4536 / VPI 7372) (Clostridium thermocellum).